A 425-amino-acid polypeptide reads, in one-letter code: GTPase Obg (425 aa).

The Obg domain maps to 1 to 158; it reads MFRDSAKIYV…YSLILEMKMI (158 aa). Residues 159-330 enclose the OBG-type G domain; that stretch reads ADVGLVGYPN…LLYAVSETLK (172 aa). GTP is bound by residues 165-172, 190-194, 212-215, 282-285, and 311-313; these read GYPNVGKS, FTTLV, DIPG, NKMD, and SAA. 2 residues coordinate Mg(2+): Ser-172 and Thr-192. One can recognise an OCT domain in the interval 348-425; the sequence is YKVQEEKPFE…IYDTEFDYTR (78 aa).

This sequence belongs to the TRAFAC class OBG-HflX-like GTPase superfamily. OBG GTPase family. As to quaternary structure, monomer. The cofactor is Mg(2+).

It localises to the cytoplasm. An essential GTPase which binds GTP, GDP and possibly (p)ppGpp with moderate affinity, with high nucleotide exchange rates and a fairly low GTP hydrolysis rate. Plays a role in control of the cell cycle, stress response, ribosome biogenesis and in those bacteria that undergo differentiation, in morphogenesis control. The protein is GTPase Obg of Ruminiclostridium cellulolyticum (strain ATCC 35319 / DSM 5812 / JCM 6584 / H10) (Clostridium cellulolyticum).